Reading from the N-terminus, the 148-residue chain is MYRQGTPNRVVISTVPLSGEATATAGTGPGCEGGLGGWRLFKACRHEQEDGLYAMLPPDYFPVVPSSKPLLVKVPAPGASPDRTGGAVHFECVPAPRRPLQFFRQLYDGTFVKLPHNFPDECYEDEAPLATASTSTPTWIRNPCPWET.

This is an uncharacterized protein from Bos taurus (Bovine).